A 131-amino-acid chain; its full sequence is Small ribosomal subunit protein uS9 (131 aa).

Belongs to the universal ribosomal protein uS9 family.

In Actinobacillus succinogenes (strain ATCC 55618 / DSM 22257 / CCUG 43843 / 130Z), this protein is Small ribosomal subunit protein uS9.